Here is a 402-residue protein sequence, read N- to C-terminus: O-glucosyltransferase rumi homolog (402 aa).

The N-terminal stretch at 1 to 20 (MPYLEIVLALLVLSFQLGHS) is a signal peptide. Disulfide bonds link Cys67/Cys74, Cys72/Cys375, Cys118/Cys124, and Cys279/Cys302. Asn71 is a glycosylation site (N-linked (GlcNAc...) asparagine). Asp149 acts as the Proton donor/acceptor in catalysis. The interval 189-194 (AISLYP) is interaction with the consensus sequence C-X-S-X-[PA]-C in peptide substrates. Residues 226–230 (RGSRT), Arg234, 273–275 (VRL), and 291–295 (AASFR) contribute to the UDP-alpha-D-glucose site.

This sequence belongs to the glycosyltransferase 90 family.

It is found in the endoplasmic reticulum lumen. The protein resides in the secreted. The protein operates within protein modification; protein glycosylation. Protein O-glucosyltransferase. Catalyzes the reaction that attaches glucose through an O-glycosidic linkage to a conserved serine residue found in the consensus sequence C-X-S-X-[PA]-C in epidermal growth factor-like repeats. Regulates Notch signaling by glucosylating Notch in the ER, glucosylation is required for the correct folding and cleavage of Notch. In Aedes aegypti (Yellowfever mosquito), this protein is O-glucosyltransferase rumi homolog.